The sequence spans 522 residues: Type-2 serine--tRNA ligase (522 aa).

A319 serves as a coordination point for L-serine. C321 contributes to the Zn(2+) binding site. Position 350 (R350) interacts with L-serine. Residues 350–352 (RWE) and 361–362 (RV) contribute to the ATP site. 367 to 369 (RIE) contacts L-serine. Zn(2+)-binding residues include E369 and C476. Residue R483 participates in ATP binding.

The protein belongs to the class-II aminoacyl-tRNA synthetase family. Type-2 seryl-tRNA synthetase subfamily. Homodimer. The cofactor is Zn(2+).

The protein resides in the cytoplasm. It catalyses the reaction tRNA(Ser) + L-serine + ATP = L-seryl-tRNA(Ser) + AMP + diphosphate + H(+). The catalysed reaction is tRNA(Sec) + L-serine + ATP = L-seryl-tRNA(Sec) + AMP + diphosphate + H(+). It participates in aminoacyl-tRNA biosynthesis; selenocysteinyl-tRNA(Sec) biosynthesis; L-seryl-tRNA(Sec) from L-serine and tRNA(Sec): step 1/1. Functionally, catalyzes the attachment of serine to tRNA(Ser). Is also able to aminoacylate tRNA(Sec) with serine, to form the misacylated tRNA L-seryl-tRNA(Sec), which will be further converted into selenocysteinyl-tRNA(Sec). The polypeptide is Type-2 serine--tRNA ligase (serS) (Methanococcus aeolicus (strain ATCC BAA-1280 / DSM 17508 / OCM 812 / Nankai-3)).